A 160-amino-acid polypeptide reads, in one-letter code: Ribosome maturation factor RimP (160 aa).

It belongs to the RimP family.

The protein localises to the cytoplasm. Required for maturation of 30S ribosomal subunits. This chain is Ribosome maturation factor RimP, found in Orientia tsutsugamushi (strain Boryong) (Rickettsia tsutsugamushi).